Here is a 156-residue protein sequence, read N- to C-terminus: Ribonuclease H (156 aa).

The RNase H type-1 domain occupies 3–144 (ELKQIRIYTD…CDTLAREAAE (142 aa)). D12, E50, D72, and D136 together coordinate Mg(2+).

It belongs to the RNase H family. Monomer. It depends on Mg(2+) as a cofactor.

The protein localises to the cytoplasm. It catalyses the reaction Endonucleolytic cleavage to 5'-phosphomonoester.. Endonuclease that specifically degrades the RNA of RNA-DNA hybrids. The polypeptide is Ribonuclease H (Shewanella amazonensis (strain ATCC BAA-1098 / SB2B)).